The primary structure comprises 194 residues: MNLMTTITGVVLAGGKARRMGGVDKGLLDLNGKPLWQHVADALMTQLSHVVVNANRHQEIYQAGGLKVIEDSLADYPGPLAGMLSVMQQEAGEWFLFCPCDTPYIPHDLAARLNHQRKDAPVVWVHDGERDHPTIAMVNRAIEPLLLEYLQAGERRVMAFMRLAGGHAVDFSDHKDAFVNVNTPEELARWQEKR.

GTP is bound by residues 12–14 (LAG), Lys-25, Asn-53, Asp-71, and Asp-101. Residue Asp-101 coordinates Mg(2+).

The protein belongs to the MobA family. As to quaternary structure, monomer. The cofactor is Mg(2+).

Its subcellular location is the cytoplasm. It carries out the reaction Mo-molybdopterin + GTP + H(+) = Mo-molybdopterin guanine dinucleotide + diphosphate. Functionally, transfers a GMP moiety from GTP to Mo-molybdopterin (Mo-MPT) cofactor (Moco or molybdenum cofactor) to form Mo-molybdopterin guanine dinucleotide (Mo-MGD) cofactor. This chain is Molybdenum cofactor guanylyltransferase, found in Escherichia coli O157:H7.